The following is a 1327-amino-acid chain: Polarized growth protein L1 (1327 aa).

The first 30 residues, 1–30, serve as a signal peptide directing secretion; sequence MRESFASLLATGAGKLALSLLFAATPFTSA. At 31-1169 the chain is on the extracellular side; sequence YTFNQVPSPN…FSQQNGKHLA (1139 aa). N-linked (GlcNAc...) asparagine glycans are attached at residues Asn74, Asn90, Asn105, Asn115, Asn132, Asn170, Asn217, Asn224, Asn235, Asn318, Asn342, Asn452, Asn475, Asn601, Asn639, Asn648, and Asn691. The Kelch 1 repeat unit spans residues 595-641; sequence NLYVAGNFSNNDGRNNIFSFKQGASDPTALPNRGLNRQVMTLYQNDS. One copy of the Kelch 2 repeat lies at 699–754; it reads QVLAVSGFFDSVNEFNGNPSTNVQDFAVWVPSRSNWLHNLDFFTLAMSGRLMTFAD. Residues Asn835, Asn852, Asn877, and Asn931 are each glycosylated (N-linked (GlcNAc...) asparagine). Kelch repeat units lie at residues 945–993 and 994–1040; these read DVFV…ISDT and QMYI…TIAN. N-linked (GlcNAc...) asparagine glycosylation is found at Asn1000, Asn1006, and Asn1126. A helical membrane pass occupies residues 1170–1190; that stretch reads LWAIVLIGLAIALVLTFLLVV. Residues 1191–1327 are Cytoplasmic-facing; that stretch reads AGILLEWYRN…VFDTILACSS (137 aa).

Belongs to the RAX2 family.

Its subcellular location is the cell membrane. In terms of biological role, has been identified within the cluster that mediates the biosynthesis of squalestatin, but as its expression does not follow that of the other cluster members and it is not conserved in close related clusters, L1 seems not to be involved in the biosynthesis of squalestatin. Probably plays a role as a cell polarity regulator. The sequence is that of Polarized growth protein L1 from Phoma sp. (strain ATCC 20986 / MF5453).